Consider the following 393-residue polypeptide: uncharacterized protein (393 aa).

[4Fe-4S] cluster-binding residues include Cys9, Cys15, Cys18, and Cys97. S-adenosyl-L-methionine is bound by residues Gln231, Tyr258, Glu279, and Asp325. Catalysis depends on Cys352, which acts as the Nucleophile.

This sequence belongs to the class I-like SAM-binding methyltransferase superfamily. RNA M5U methyltransferase family.

This is an uncharacterized protein from Leptospira interrogans serogroup Icterohaemorrhagiae serovar Lai (strain 56601).